Consider the following 534-residue polypeptide: MAQIKADEITALLKEQIANYDAKVRVDEVGTVISLGDGIARLHGLDKCMAGEMLEFPHGVYGMAMNLEEDQVGAVLLGDYTEIREGDQVKRTGQILSVPVGDAMIGRVVNSLGEPIDDKGPIAASDRFPVERLAPGVIDRQPVREPMMTGLKAIDSMIPIGRGQRELIIGDRQTGKTAVALDTIINSKGRDLICVYCAIGQKRSSVAGVVQTLAKHGALDYTVVVVASASEPAPMLYLAPYAATAMAEYFRDNGKHALIIYDDLSKHAVAYRELSLLLRRPPGREAYPGDVFYLHSRLLERSSKLSKEKGGGSLTALPIIETQAGDVSAYIPTNVISITDGQIFLETDLFNSGVRPAVNVGLSVSRVGFSAAIKAIKQVGSTLKLDLAQYRDLAAFAQFGSDLDKATQNQLNRGQRLTELLKQPQFQPLSAEQQVMILFAGTQGFLDDIKVPYIRAFEDGLYKYLDASQRQLLNDIATKKALDDELRGRVKDALNEYKQNFLDEHEDARVKSETAQAAGKDKDEKAAATAGAGK.

170–177 (GDRQTGKT) contacts ATP. The tract at residues 505 to 534 (HEDARVKSETAQAAGKDKDEKAAATAGAGK) is disordered.

The protein belongs to the ATPase alpha/beta chains family. As to quaternary structure, F-type ATPases have 2 components, CF(1) - the catalytic core - and CF(0) - the membrane proton channel. CF(1) has five subunits: alpha(3), beta(3), gamma(1), delta(1), epsilon(1). CF(0) has three main subunits: a(1), b(2) and c(9-12). The alpha and beta chains form an alternating ring which encloses part of the gamma chain. CF(1) is attached to CF(0) by a central stalk formed by the gamma and epsilon chains, while a peripheral stalk is formed by the delta and b chains.

The protein localises to the cell inner membrane. It catalyses the reaction ATP + H2O + 4 H(+)(in) = ADP + phosphate + 5 H(+)(out). Its function is as follows. Produces ATP from ADP in the presence of a proton gradient across the membrane. The alpha chain is a regulatory subunit. The sequence is that of ATP synthase subunit alpha from Acidobacterium capsulatum (strain ATCC 51196 / DSM 11244 / BCRC 80197 / JCM 7670 / NBRC 15755 / NCIMB 13165 / 161).